Here is a 336-residue protein sequence, read N- to C-terminus: Large ribosomal subunit protein uL3 (336 aa).

The disordered stretch occupies residues 1–34 (MVRHHQPRKGSVAFSPRKRAAKETPRIKSWPQND).

This sequence belongs to the universal ribosomal protein uL3 family. Part of the 50S ribosomal subunit. Forms a cluster with proteins L14 and L24e.

One of the primary rRNA binding proteins, it binds directly near the 3'-end of the 23S rRNA, where it nucleates assembly of the 50S subunit. In Methanobrevibacter smithii (strain ATCC 35061 / DSM 861 / OCM 144 / PS), this protein is Large ribosomal subunit protein uL3.